The chain runs to 1153 residues: Error-prone DNA polymerase (1153 aa).

2 disordered regions span residues Met1–Pro39 and Val64–Gln89.

This sequence belongs to the DNA polymerase type-C family. DnaE2 subfamily.

It is found in the cytoplasm. It carries out the reaction DNA(n) + a 2'-deoxyribonucleoside 5'-triphosphate = DNA(n+1) + diphosphate. In terms of biological role, DNA polymerase involved in damage-induced mutagenesis and translesion synthesis (TLS). It is not the major replicative DNA polymerase. The sequence is that of Error-prone DNA polymerase from Corynebacterium jeikeium (strain K411).